The sequence spans 99 residues: Integration host factor subunit alpha (99 aa).

The protein belongs to the bacterial histone-like protein family. In terms of assembly, heterodimer of an alpha and a beta chain.

In terms of biological role, this protein is one of the two subunits of integration host factor, a specific DNA-binding protein that functions in genetic recombination as well as in transcriptional and translational control. In Xylella fastidiosa (strain M12), this protein is Integration host factor subunit alpha.